Consider the following 122-residue polypeptide: Large ribosomal subunit protein uL14c (122 aa).

Belongs to the universal ribosomal protein uL14 family. Part of the 50S ribosomal subunit.

The protein resides in the plastid. The protein localises to the chloroplast. Functionally, binds to 23S rRNA. This chain is Large ribosomal subunit protein uL14c, found in Dioscorea elephantipes (Elephant's foot yam).